The following is a 309-amino-acid chain: Homoserine O-succinyltransferase (309 aa).

The active-site Acyl-thioester intermediate is the C142. 2 residues coordinate substrate: K163 and S192. Catalysis depends on H235, which acts as the Proton acceptor. Residue E237 is part of the active site. R249 is a substrate binding site.

It belongs to the MetA family. In terms of assembly, homodimer.

It localises to the cytoplasm. It catalyses the reaction L-homoserine + succinyl-CoA = O-succinyl-L-homoserine + CoA. It functions in the pathway amino-acid biosynthesis; L-methionine biosynthesis via de novo pathway; O-succinyl-L-homoserine from L-homoserine: step 1/1. Transfers a succinyl group from succinyl-CoA to L-homoserine, forming succinyl-L-homoserine. This chain is Homoserine O-succinyltransferase, found in Escherichia coli (strain ATCC 8739 / DSM 1576 / NBRC 3972 / NCIMB 8545 / WDCM 00012 / Crooks).